A 243-amino-acid polypeptide reads, in one-letter code: Carboxy-S-adenosyl-L-methionine synthase (243 aa).

Residues tyrosine 40, 65 to 67 (GSS), 90 to 91 (DN), 118 to 119 (DI), asparagine 133, and arginine 200 each bind S-adenosyl-L-methionine.

The protein belongs to the class I-like SAM-binding methyltransferase superfamily. Cx-SAM synthase family. As to quaternary structure, homodimer.

It catalyses the reaction prephenate + S-adenosyl-L-methionine = carboxy-S-adenosyl-L-methionine + 3-phenylpyruvate + H2O. Catalyzes the conversion of S-adenosyl-L-methionine (SAM) to carboxy-S-adenosyl-L-methionine (Cx-SAM). This Shewanella frigidimarina (strain NCIMB 400) protein is Carboxy-S-adenosyl-L-methionine synthase.